Here is a 179-residue protein sequence, read N- to C-terminus: Large ribosomal subunit protein uL5 (179 aa).

This sequence belongs to the universal ribosomal protein uL5 family. In terms of assembly, part of the 50S ribosomal subunit; part of the 5S rRNA/L5/L18/L25 subcomplex. Contacts the 5S rRNA and the P site tRNA. Forms a bridge to the 30S subunit in the 70S ribosome.

In terms of biological role, this is one of the proteins that bind and probably mediate the attachment of the 5S RNA into the large ribosomal subunit, where it forms part of the central protuberance. In the 70S ribosome it contacts protein S13 of the 30S subunit (bridge B1b), connecting the 2 subunits; this bridge is implicated in subunit movement. Contacts the P site tRNA; the 5S rRNA and some of its associated proteins might help stabilize positioning of ribosome-bound tRNAs. The chain is Large ribosomal subunit protein uL5 from Shewanella woodyi (strain ATCC 51908 / MS32).